Reading from the N-terminus, the 76-residue chain is Translational regulator CsrA (76 aa).

Belongs to the CsrA/RsmA family. As to quaternary structure, homodimer; the beta-strands of each monomer intercalate to form a hydrophobic core, while the alpha-helices form wings that extend away from the core.

Its subcellular location is the cytoplasm. In terms of biological role, a translational regulator that binds mRNA to regulate translation initiation and/or mRNA stability. Usually binds in the 5'-UTR at or near the Shine-Dalgarno sequence preventing ribosome-binding, thus repressing translation. Its main target seems to be the major flagellin gene, while its function is anatagonized by FliW. In Helicobacter pylori (strain P12), this protein is Translational regulator CsrA.